Reading from the N-terminus, the 1312-residue chain is Retinoblastoma-like protein A (1312 aa).

Disordered stretches follow at residues 1-67 (MMAH…NNEN), 168-231 (SSSS…KNSS), 336-359 (HNYNNNSNNNNNNNNNNNNNNNNN), 536-611 (NNNN…IYGT), 987-1023 (NNNNNNNNNNNNNNNNNNNNNNINNNNNNNENNNNNN), 1168-1236 (KKND…NNTE), and 1249-1312 (EESP…RLKS). A compositionally biased stretch (low complexity) spans 10-67 (TNINTKTTAPTTTTTEQQPEQQQQQPEQQQQEKQNNNNNNNNNNNNNNNINNNENNEN). Residues 36-117 (EQQQQEKQNN…TSSALNVDQD (82 aa)) are a coiled coil. Residues 168–179 (SSSSFQPDNNSK) are compositionally biased toward polar residues. Residues 180–189 (IKGRKIRKTN) show a composition bias toward basic residues. Residues 195–230 (NNDSNEEEEETTTDTEEEEEEDTLLNENNNSINKNS) adopt a coiled-coil conformation. Residues 198–218 (SNEEEEETTTDTEEEEEEDTL) are compositionally biased toward acidic residues. Low complexity-rich tracts occupy residues 219–231 (LNENNNSINKNSS), 337–359 (NYNNNSNNNNNNNNNNNNNNNNN), and 536–595 (NNNN…SSSS). Low complexity-rich tracts occupy residues 1185–1234 (NNNN…NNNN), 1251–1275 (SPSTPSSSSSPTILNNNKKNNNNNK), and 1286–1305 (SPSSSPLSSSSSSSSSSSSG).

The protein belongs to the retinoblastoma protein (RB) family.

The protein localises to the nucleus. Its function is as follows. Key regulator of entry into cell division. Directly involved in heterochromatin formation by maintaining overall chromatin structure and, in particular, that of constitutive heterochromatin by stabilizing histone methylation. Controls histone H4 'Lys-20' trimethylation. Probably acts as a transcription repressor by recruiting chromatin-modifying enzymes to promoters. Plays a dual role, regulating cell-cycle progression and transcriptional events leading to terminal differentiation. In the absence of a G1 phase, functions in late G2 controlling the expression of both S-phase and mitotic genes. Controls stalk/spore preference by suppressing the DIF response in cells destined for the spore pathway. DIF is a chlorinated hydroxyphenone made by cells of spore pathway that promotes stalk differentiation. The chain is Retinoblastoma-like protein A from Dictyostelium discoideum (Social amoeba).